We begin with the raw amino-acid sequence, 400 residues long: Acetate kinase (400 aa).

Residue Asn10 participates in Mg(2+) binding. Lys17 contacts ATP. Arg91 serves as a coordination point for substrate. The active-site Proton donor/acceptor is the Asp150. Residues 210–214 (HLGNG), 285–287 (DCR), and 333–337 (GIGEN) each bind ATP. A Mg(2+)-binding site is contributed by Glu387.

The protein belongs to the acetokinase family. As to quaternary structure, homodimer. It depends on Mg(2+) as a cofactor. Mn(2+) serves as cofactor.

It is found in the cytoplasm. The enzyme catalyses acetate + ATP = acetyl phosphate + ADP. It functions in the pathway metabolic intermediate biosynthesis; acetyl-CoA biosynthesis; acetyl-CoA from acetate: step 1/2. Functionally, catalyzes the formation of acetyl phosphate from acetate and ATP. Can also catalyze the reverse reaction. The chain is Acetate kinase from Escherichia coli O157:H7.